The sequence spans 114 residues: Fumarate reductase subunit D (114 aa).

3 consecutive transmembrane segments (helical) span residues 24 to 44, 50 to 70, and 92 to 112; these read VSAI…PFGL, LITF…TIFP, and GGFI…FAVI.

This sequence belongs to the FrdD family. Part of an enzyme complex containing four subunits: a flavoprotein (FrdA), an iron-sulfur protein (FrdB), and two hydrophobic anchor proteins (FrdC and FrdD).

It localises to the cell inner membrane. Its function is as follows. Anchors the catalytic components of the fumarate reductase complex to the cell membrane, binds quinones. The sequence is that of Fumarate reductase subunit D from Haemophilus influenzae (strain PittEE).